The sequence spans 83 residues: Small ribosomal subunit protein bS18 (83 aa).

This sequence belongs to the bacterial ribosomal protein bS18 family. In terms of assembly, part of the 30S ribosomal subunit. Forms a tight heterodimer with protein bS6.

In terms of biological role, binds as a heterodimer with protein bS6 to the central domain of the 16S rRNA, where it helps stabilize the platform of the 30S subunit. The chain is Small ribosomal subunit protein bS18 from Cytophaga hutchinsonii (strain ATCC 33406 / DSM 1761 / CIP 103989 / NBRC 15051 / NCIMB 9469 / D465).